The primary structure comprises 104 residues: Large ribosomal subunit protein uL24 (104 aa).

Belongs to the universal ribosomal protein uL24 family. Part of the 50S ribosomal subunit.

Functionally, one of two assembly initiator proteins, it binds directly to the 5'-end of the 23S rRNA, where it nucleates assembly of the 50S subunit. In terms of biological role, one of the proteins that surrounds the polypeptide exit tunnel on the outside of the subunit. The sequence is that of Large ribosomal subunit protein uL24 from Azotobacter vinelandii (strain DJ / ATCC BAA-1303).